The chain runs to 65 residues: Large ribosomal subunit protein bL35 (65 aa).

The interval 20-42 is disordered; sequence GKVRRHHANASHIMTTKTTKRKR.

It belongs to the bacterial ribosomal protein bL35 family.

The protein is Large ribosomal subunit protein bL35 of Syntrophus aciditrophicus (strain SB).